We begin with the raw amino-acid sequence, 395 residues long: Elongation factor Tu (395 aa).

A tr-type G domain is found at 10–205 (KPHVNIGTIG…AVDSYIPMPE (196 aa)). Residues 19–26 (GHIDHGKT) are G1. 19–26 (GHIDHGKT) contacts GTP. Thr-26 serves as a coordination point for Mg(2+). Residues 61 to 65 (GITIA) are G2. Positions 82-85 (DCPG) are G3. GTP contacts are provided by residues 82–86 (DCPGH) and 137–140 (NKVD). The tract at residues 137–140 (NKVD) is G4. The segment at 175-177 (SAL) is G5.

Belongs to the TRAFAC class translation factor GTPase superfamily. Classic translation factor GTPase family. EF-Tu/EF-1A subfamily. Monomer.

It is found in the cytoplasm. The enzyme catalyses GTP + H2O = GDP + phosphate + H(+). GTP hydrolase that promotes the GTP-dependent binding of aminoacyl-tRNA to the A-site of ribosomes during protein biosynthesis. In Solibacter usitatus (strain Ellin6076), this protein is Elongation factor Tu.